A 120-amino-acid polypeptide reads, in one-letter code: Large ribosomal subunit protein uL18 (120 aa).

This sequence belongs to the universal ribosomal protein uL18 family. Part of the 50S ribosomal subunit; part of the 5S rRNA/L5/L18/L25 subcomplex. Contacts the 5S and 23S rRNAs.

This is one of the proteins that bind and probably mediate the attachment of the 5S RNA into the large ribosomal subunit, where it forms part of the central protuberance. In Macrococcus caseolyticus (strain JCSC5402) (Macrococcoides caseolyticum), this protein is Large ribosomal subunit protein uL18.